The following is a 260-amino-acid chain: MSIHLVIIDALNLIRRVHSAQPDPTDIARTITTTQRTLTRILSEAKPTHIIAVFDHHEQDRGWRAEILPDYKQNRKPMPEPLMQGLDAIQQAWWEQGIDSLLSEGDEADDLVATLATKVASHGEKVTIVSTDKGYCQLLSPTLQIRDYFQHRWLDEPFIEKEFGVKPSQLADYWGLTGISSSQVPGVPGIGPKAAKEILTQFEDIEAAYASDELAPKYRKKLDEHIESARLCKRVAALKCDIELGFNLQDIRFTGPNKAE.

Residue aspartate 109 participates in Mg(2+) binding. The region spanning valine 165–alanine 259 is the 5'-3' exonuclease domain. Residues leucine 176, proline 185, valine 187, and isoleucine 190 each coordinate K(+). The tract at residues glycine 189 to alanine 194 is interaction with DNA.

This sequence belongs to the Xni family. Mg(2+) is required as a cofactor. K(+) serves as cofactor.

Functionally, has flap endonuclease activity. During DNA replication, flap endonucleases cleave the 5'-overhanging flap structure that is generated by displacement synthesis when DNA polymerase encounters the 5'-end of a downstream Okazaki fragment. The protein is Flap endonuclease Xni of Vibrio parahaemolyticus serotype O3:K6 (strain RIMD 2210633).